A 150-amino-acid chain; its full sequence is Urease subunit beta (150 aa).

The span at 122 to 140 shows a compositional bias: low complexity; sequence GAVVGDSPAATPGTTGATG. The disordered stretch occupies residues 122 to 150; sequence GAVVGDSPAATPGTTGATGDLPGYLGEGS.

This sequence belongs to the urease beta subunit family. In terms of assembly, heterotrimer of UreA (gamma), UreB (beta) and UreC (alpha) subunits. Three heterotrimers associate to form the active enzyme.

The protein resides in the cytoplasm. It carries out the reaction urea + 2 H2O + H(+) = hydrogencarbonate + 2 NH4(+). Its pathway is nitrogen metabolism; urea degradation; CO(2) and NH(3) from urea (urease route): step 1/1. In Frankia alni (strain DSM 45986 / CECT 9034 / ACN14a), this protein is Urease subunit beta.